The sequence spans 278 residues: Tyrosine-protein phosphatase pmp1 (278 aa).

In terms of domain architecture, Tyrosine-protein phosphatase spans 60–214 (GPVCIYPPNI…LSEYQQIIRK (155 aa)). Residue C158 is the Phosphocysteine intermediate of the active site. Positions 217–278 (SQGPYQSSSL…SSGSISNDAS (62 aa)) are disordered. A compositionally biased stretch (polar residues) spans 252–278 (SPSTSESSMFTNLRRTRSSGSISNDAS).

Belongs to the protein-tyrosine phosphatase family. Non-receptor class dual specificity subfamily.

It carries out the reaction O-phospho-L-tyrosyl-[protein] + H2O = L-tyrosyl-[protein] + phosphate. Its function is as follows. Dual specificity phosphatase that dephosphorylates MAP kinase pmk1 on a Tyr. Has a role in chloride ion homeostasis by inactivating this pmk1 MAP kinase pathway. In Schizosaccharomyces pombe (strain 972 / ATCC 24843) (Fission yeast), this protein is Tyrosine-protein phosphatase pmp1 (pmp1).